Here is a 507-residue protein sequence, read N- to C-terminus: ATP synthase subunit alpha, chloroplastic (507 aa).

169–176 (IGDRQTGK) contacts ATP.

The protein belongs to the ATPase alpha/beta chains family. F-type ATPases have 2 components, CF(1) - the catalytic core - and CF(0) - the membrane proton channel. CF(1) has five subunits: alpha(3), beta(3), gamma(1), delta(1), epsilon(1). CF(0) has four main subunits: a, b, b' and c.

Its subcellular location is the plastid. It localises to the chloroplast thylakoid membrane. The catalysed reaction is ATP + H2O + 4 H(+)(in) = ADP + phosphate + 5 H(+)(out). Functionally, produces ATP from ADP in the presence of a proton gradient across the membrane. The alpha chain is a regulatory subunit. This is ATP synthase subunit alpha, chloroplastic from Saccharum hybrid (Sugarcane).